The chain runs to 661 residues: MPNSEEVMAKERVVSPSAEFKKNANISLKNYKSLYKESIENPNKFWAREANRLIWFKKWTKVLSHDFKNAKVEWFKGGKLNVSYNCLDRHISTPLKNKAALIWEGDNPTESRVLTYYDVYREVNRFANILKKFGVKKGDRVLVYLPMIPELAITILACTRIGAIHSVVFGGFSPEALQSRIDDCKPKLVVTADGGFRGGKPIELKKNVDLALEKSKEKVKTVIVVRRTGNESGLTWKDGQDYWYHFLMNDPELSAYCKPEEMDAEDPLFILYTSGSTGKPKGVLHTTGGYLLGANLTFHYVFDIKPEDTYWCTADIGWVTGHSYLVYGPLSNGASSVMFEGVPSYPDAGRFWDVIDKYGVNIFYTAPTAIRALMREGLNHIQKRDLSSLRLLGSVGEPINPEAWEWYFKNIGKGKCPIVDTWWQTETGSIMITALPGAIPQKPGSATLPFFGVQPVLVDNDGKEITDKGEVSGNLCIKGPWPSMMRGVYGDPKRFFETYFSQFKGYYFTGDGARRDKDGYFWITGRVDDVINVSGHRIGSAEVESALVENKSVAEAAVVGFPHDIKGQGIYAYVTVKEGVTTNDVLKKELISTVEKMIGKIARPDVIHWAPGLPKTRSGKIMRRILRKIVSGEFEGLGDTSTLADPSVVQKLIEDKKKFHS.

Residues 197 to 200 and T320 contribute to the CoA site; that span reads RGGK. Residues 396–398, 420–425, D511, and R526 each bind ATP; these read GEP and DTWWQT. S534 is a binding site for CoA. Residue R537 participates in ATP binding. Mg(2+) contacts are provided by V548 and V553. K620 bears the N6-acetyllysine mark.

The protein belongs to the ATP-dependent AMP-binding enzyme family. Mg(2+) is required as a cofactor. In terms of processing, acetylated. Deacetylation by the SIR2-homolog deacetylase activates the enzyme.

It carries out the reaction acetate + ATP + CoA = acetyl-CoA + AMP + diphosphate. Its function is as follows. Catalyzes the conversion of acetate into acetyl-CoA (AcCoA), an essential intermediate at the junction of anabolic and catabolic pathways. AcsA undergoes a two-step reaction. In the first half reaction, AcsA combines acetate with ATP to form acetyl-adenylate (AcAMP) intermediate. In the second half reaction, it can then transfer the acetyl group from AcAMP to the sulfhydryl group of CoA, forming the product AcCoA. In Leptospira interrogans serogroup Icterohaemorrhagiae serovar Lai (strain 56601), this protein is Acetyl-coenzyme A synthetase.